The primary structure comprises 330 residues: Lipoyl synthase (330 aa).

Positions 1-31 (MSDAPIATSSEVTQSPADYDPTKKQKSAEKT) are disordered. Residues 7–16 (ATSSEVTQSP) show a composition bias toward polar residues. The span at 20 to 31 (DPTKKQKSAEKT) shows a compositional bias: basic and acidic residues. Residues Cys-77, Cys-82, Cys-88, Cys-103, Cys-107, Cys-110, and Ser-317 each contribute to the [4Fe-4S] cluster site. Residues 88–306 (CFGKGTATFM…EEEAYKMGFT (219 aa)) enclose the Radical SAM core domain.

This sequence belongs to the radical SAM superfamily. Lipoyl synthase family. [4Fe-4S] cluster is required as a cofactor.

It is found in the cytoplasm. It catalyses the reaction [[Fe-S] cluster scaffold protein carrying a second [4Fe-4S](2+) cluster] + N(6)-octanoyl-L-lysyl-[protein] + 2 oxidized [2Fe-2S]-[ferredoxin] + 2 S-adenosyl-L-methionine + 4 H(+) = [[Fe-S] cluster scaffold protein] + N(6)-[(R)-dihydrolipoyl]-L-lysyl-[protein] + 4 Fe(3+) + 2 hydrogen sulfide + 2 5'-deoxyadenosine + 2 L-methionine + 2 reduced [2Fe-2S]-[ferredoxin]. The protein operates within protein modification; protein lipoylation via endogenous pathway; protein N(6)-(lipoyl)lysine from octanoyl-[acyl-carrier-protein]: step 2/2. Its function is as follows. Catalyzes the radical-mediated insertion of two sulfur atoms into the C-6 and C-8 positions of the octanoyl moiety bound to the lipoyl domains of lipoate-dependent enzymes, thereby converting the octanoylated domains into lipoylated derivatives. This Cupriavidus metallidurans (strain ATCC 43123 / DSM 2839 / NBRC 102507 / CH34) (Ralstonia metallidurans) protein is Lipoyl synthase.